The following is an 83-amino-acid chain: Small ribosomal subunit protein uS17 (83 aa).

The protein belongs to the universal ribosomal protein uS17 family. As to quaternary structure, part of the 30S ribosomal subunit.

In terms of biological role, one of the primary rRNA binding proteins, it binds specifically to the 5'-end of 16S ribosomal RNA. This is Small ribosomal subunit protein uS17 from Campylobacter jejuni subsp. jejuni serotype O:6 (strain 81116 / NCTC 11828).